The chain runs to 520 residues: Membrane-bound glycerophospholipid O-acyltransferase 2 (520 aa).

6 helical membrane-spanning segments follow: residues 22–42 (PIDQVNFVVCQLFALLAAIWF), 61–81 (TLLGLYLALFCFGWYALHFLV), 88–108 (CIMIIIGVENMHNYCFVFALG), 184–204 (FMGILAGPLCSYKDYITFIEG), 237–257 (LLVCGLSLLFHLTICTTLPVE), and 264–284 (FQATASWPTKIIYLYISLLAA). Active-site residues include asparagine 342 and histidine 373. The next 3 helical transmembrane spans lie at 366-386 (FILSAIWHGVYPGYYLTFLTG), 416-436 (VITWIVTQVAISYTVVPFVLL), and 444-464 (FYSSWYYCLHILGILVLLLLP).

This sequence belongs to the membrane-bound acyltransferase family. Expressed in neutrophils.

The protein localises to the endoplasmic reticulum membrane. The enzyme catalyses a 1-acyl-sn-glycero-3-phosphocholine + an acyl-CoA = a 1,2-diacyl-sn-glycero-3-phosphocholine + CoA. The catalysed reaction is a 1-acyl-sn-glycero-3-phosphoethanolamine + an acyl-CoA = a 1,2-diacyl-sn-glycero-3-phosphoethanolamine + CoA. It catalyses the reaction a 1-acyl-sn-glycero-3-phosphate + an acyl-CoA = a 1,2-diacyl-sn-glycero-3-phosphate + CoA. It carries out the reaction (9Z)-hexadecenoyl-CoA + 1-hexadecanoyl-sn-glycero-3-phosphocholine = 1-hexadecanoyl-2-(9Z-hexadecenoyl)-sn-glycero-3-phosphocholine + CoA. The enzyme catalyses 1-hexadecanoyl-sn-glycero-3-phosphoethanolamine + (9Z)-octadecenoyl-CoA = 1-hexadecanoyl-2-(9Z-octadecenoyl)-sn-glycero-3-phosphoethanolamine + CoA. The catalysed reaction is 1-hexadecanoyl-sn-glycero-3-phosphoethanolamine + (9Z)-hexadecenoyl-CoA = 1-hexadecanoyl-2-(9Z)-hexadecenoyl-sn-glycero-3-phosphoethanolamine + CoA. It catalyses the reaction 1-(9Z-octadecenoyl)-sn-glycero-3-phospho-L-serine + hexadecanoyl-CoA = 1-(9Z)-octadecenoyl-2-hexadecanoyl-sn-glycero-3-phosphoserine + CoA. It carries out the reaction (9Z,12Z)-octadecadienoyl-CoA + 1-hexadecanoyl-sn-glycero-3-phosphocholine = 1-hexadecanoyl-2-(9Z,12Z-octadecadienoyl)-sn-glycero-3-phosphocholine + CoA. The enzyme catalyses 1-hexadecanoyl-sn-glycero-3-phosphocholine + (9Z)-octadecenoyl-CoA = 1-hexadecanoyl-2-(9Z-octadecenoyl)-sn-glycero-3-phosphocholine + CoA. The catalysed reaction is 1-hexadecanoyl-sn-glycero-3-phosphate + (9Z)-hexadecenoyl-CoA = 1-hexadecanoyl-2-[(9Z)-hexadec-9-enoyl]-sn-glycero-3-phosphate + CoA. It catalyses the reaction 1-hexadecanoyl-sn-glycero-3-phosphate + (9Z)-octadecenoyl-CoA = 1-hexadecanoyl-2-(9Z-octadecenoyl)-sn-glycero-3-phosphate + CoA. It carries out the reaction a 1-O-(1Z-alkenyl)-sn-glycero-3-phosphocholine + (9Z)-octadecenoyl-CoA = 1-O-(1Z)-alkenyl-2-(9Z)-octadecenoyl-sn-glycero-3-phosphocholine + CoA. The enzyme catalyses a 1-O-(1Z-alkenyl)-sn-glycero-3-phosphoethanolamine + (9Z)-octadecenoyl-CoA = 1-O-(1Z)-alkenyl-2-(9Z)-octadecenoyl-sn-glycero-3-phosphoethanolamine + CoA. The catalysed reaction is 1-octadecanoyl-sn-glycero-3-phosphoethanolamine + (9Z)-octadecenoyl-CoA = 1-octadecanoyl-2-(9Z-octadecenoyl)-sn-glycero-3-phosphoethanolamine + CoA. It catalyses the reaction 1-octadecanoyl-sn-glycero-3-phosphocholine + (9Z)-octadecenoyl-CoA = 1-octadecanoyl-2-(9Z-octadecenoyl)-sn-glycero-3-phosphocholine + CoA. It carries out the reaction 1-(9Z-octadecenoyl)-sn-glycero-3-phosphoethanolamine + (9Z)-octadecenoyl-CoA = 1,2-di-(9Z-octadecenoyl)-sn-glycero-3-phosphoethanolamine + CoA. It functions in the pathway lipid metabolism; phospholipid metabolism. Partially inhibited by thimerosal. Its function is as follows. Acyltransferase which catalyzes the transfer of an acyl group from an acyl-CoA to a lysophospholipid leading to the production of a phospholipid and participates in the reacylation step of the phospholipid remodeling pathway also known as the Lands cycle. Catalyzes preferentially the acylation of lysophosphatidylethanolamine (1-acyl-sn-glycero-3-phosphoethanolamine or LPE) and lysophosphatidic acid (LPA) and to a lesser extend lysophosphatidylcholine (LPC) and lysophosphatidylserine (LPS). Prefers oleoyl-CoA as the acyl donor. May be involved in chondrocyte differentiation. This Homo sapiens (Human) protein is Membrane-bound glycerophospholipid O-acyltransferase 2.